We begin with the raw amino-acid sequence, 389 residues long: Sedoheptulose-1,7-bisphosphatase, chloroplastic (389 aa).

A disulfide bridge connects residues Cys115 and Cys120. 5 residues coordinate Mg(2+): Asp126, Glu155, Asp173, Leu175, and Asp176. Residues 176–179 (DGSS), Tyr287, and Lys317 each bind substrate. Position 323 (Glu323) interacts with Mg(2+).

Belongs to the FBPase class 1 family. In terms of assembly, homodimer. The cofactor is Mg(2+).

Its subcellular location is the plastid. It localises to the chloroplast. The catalysed reaction is D-sedoheptulose 1,7-bisphosphate + H2O = D-sedoheptulose 7-phosphate + phosphate. It participates in carbohydrate biosynthesis; Calvin cycle. The sequence is that of Sedoheptulose-1,7-bisphosphatase, chloroplastic (CSBP) from Chlamydomonas reinhardtii (Chlamydomonas smithii).